We begin with the raw amino-acid sequence, 498 residues long: MWNDTQMTEIVIPPVDWRVATQLSIIFGWASVLLVIALFVPRSRTRIVGYLAMVGAMVAAAVGIPLWGVNAETFSGMLRLDSYSLTLNWLFLAAAAITMVLSLDYLPRQGIERSEYYVLVLFATGGMMLLAQGADLIILFLGLELLSIVLYVLTGFAYPRNASEEAGMKYLLIGAFAGGFVVFGIALLYGATGSMNLRAIGETLAQQTLTLEERIYLLAGAALVVVGFGYKVAMAPFHMWAPDVYEGAPTPIAGLLSVGSKAAGFAALLRFLVEALAGEWQIWAPVLAVLAIATLAVGNIGALTQRNVKRMLAYSSIGHAGYILFGVIAAGAPGGIAGQRGVEGVLLYLIAYTFTNLGAFGVLIALEHRGEAAWDMSDLAGLWSRRPWLAVAMAVCMLSLAGVPPTGGFWGKFYVFTAAWLSGMGWITVIGVIVAAIAAFYYLRIVAQMFMAEPAREVPLPMDRALRAGLALATLGVLILGFLPTPAIDLVQRVVLGG.

14 consecutive transmembrane segments (helical) span residues 19–39 (VATQLSIIFGWASVLLVIALF), 47–67 (IVGYLAMVGAMVAAAVGIPLW), 83–103 (YSLTLNWLFLAAAAITMVLSL), 114–134 (SEYYVLVLFATGGMMLLAQGA), 136–156 (LIILFLGLELLSIVLYVLTGF), 171–191 (LLIGAFAGGFVVFGIALLYGA), 215–235 (IYLLAGAALVVVGFGYKVAMA), 249–269 (PTPIAGLLSVGSKAAGFAALL), 282–302 (IWAPVLAVLAIATLAVGNIGA), 317–337 (IGHAGYILFGVIAAGAPGGIA), 345–365 (VLLYLIAYTFTNLGAFGVLIA), 389–409 (LAVAMAVCMLSLAGVPPTGGF), 420–440 (WLSGMGWITVIGVIVAAIAAF), and 468–488 (AGLALATLGVLILGFLPTPAI).

Belongs to the complex I subunit 2 family. In terms of assembly, NDH-1 is composed of 14 different subunits. Subunits NuoA, H, J, K, L, M, N constitute the membrane sector of the complex.

It localises to the cell membrane. It carries out the reaction a quinone + NADH + 5 H(+)(in) = a quinol + NAD(+) + 4 H(+)(out). Its function is as follows. NDH-1 shuttles electrons from NADH, via FMN and iron-sulfur (Fe-S) centers, to quinones in the respiratory chain. The immediate electron acceptor for the enzyme in this species is believed to be ubiquinone. Couples the redox reaction to proton translocation (for every two electrons transferred, four hydrogen ions are translocated across the cytoplasmic membrane), and thus conserves the redox energy in a proton gradient. The protein is NADH-quinone oxidoreductase subunit N 2 of Roseiflexus castenholzii (strain DSM 13941 / HLO8).